The following is a 152-amino-acid chain: SsrA-binding protein (152 aa).

Belongs to the SmpB family.

Its subcellular location is the cytoplasm. In terms of biological role, required for rescue of stalled ribosomes mediated by trans-translation. Binds to transfer-messenger RNA (tmRNA), required for stable association of tmRNA with ribosomes. tmRNA and SmpB together mimic tRNA shape, replacing the anticodon stem-loop with SmpB. tmRNA is encoded by the ssrA gene; the 2 termini fold to resemble tRNA(Ala) and it encodes a 'tag peptide', a short internal open reading frame. During trans-translation Ala-aminoacylated tmRNA acts like a tRNA, entering the A-site of stalled ribosomes, displacing the stalled mRNA. The ribosome then switches to translate the ORF on the tmRNA; the nascent peptide is terminated with the 'tag peptide' encoded by the tmRNA and targeted for degradation. The ribosome is freed to recommence translation, which seems to be the essential function of trans-translation. The protein is SsrA-binding protein of Rickettsia felis (strain ATCC VR-1525 / URRWXCal2) (Rickettsia azadi).